The primary structure comprises 137 residues: Histone H2B (137 aa).

Basic and acidic residues predominate over residues 1 to 10; sequence MAPKAADKKP. The disordered stretch occupies residues 1-46; it reads MAPKAADKKPASKAPATASKAPEKKDAGKKTAASGDKKKRSKSRKE. N6-acetyllysine; alternate is present on residues lysine 8 and lysine 9. Glycyl lysine isopeptide (Lys-Gly) (interchain with G-Cter in SUMO); alternate cross-links involve residues lysine 8 and lysine 9. Phosphoserine is present on serine 12. Position 13 is an N6-acetyllysine (lysine 13). Residue lysine 24 is modified to N6-acetyllysine; alternate. Residue lysine 24 forms a Glycyl lysine isopeptide (Lys-Gly) (interchain with G-Cter in SUMO); alternate linkage. Lysine 25 participates in a covalent cross-link: Glycyl lysine isopeptide (Lys-Gly) (interchain with G-Cter in SUMO). Lysine 131 is covalently cross-linked (Glycyl lysine isopeptide (Lys-Gly) (interchain with G-Cter in ubiquitin)).

This sequence belongs to the histone H2B family. In terms of assembly, the nucleosome is a histone octamer containing two molecules each of H2A, H2B, H3 and H4 assembled in one H3-H4 heterotetramer and two H2A-H2B heterodimers. The octamer wraps approximately 147 bp of DNA. In terms of processing, monoubiquitinated by the UBC2-BRE1 complex to form H2BK123ub1. H2BK123ub1 gives a specific tag for epigenetic transcriptional activation and is also prerequisite for H3K4me and H3K79me formation. H2BK123ub1 also modulates the formation of double-strand breaks during meiosis and is a prerequisite for DNA-damage checkpoint activation. Post-translationally, phosphorylated to form H2BS10ph during progression through meiotic prophase. May be correlated with chromosome condensation. Acetylated by GCN5 to form H2BK11ac and H2BK16ac. H2BK16ac can also be formed by ESA1. Acetylation of N-terminal lysines and particularly formation of H2BK11acK16ac has a positive effect on transcription. In terms of processing, sumoylation to form H2BK6su or H2BK7su, and probably also H2BK16su or H2BK17su, occurs preferentially near the telomeres and represses gene transcription.

It is found in the nucleus. Its subcellular location is the chromosome. Functionally, core component of nucleosome. Nucleosomes wrap and compact DNA into chromatin, limiting DNA accessibility to the cellular machineries which require DNA as a template. Histones thereby play a central role in transcription regulation, DNA repair, DNA replication and chromosomal stability. DNA accessibility is regulated via a complex set of post-translational modifications of histones, also called histone code, and nucleosome remodeling. This Gibberella zeae (strain ATCC MYA-4620 / CBS 123657 / FGSC 9075 / NRRL 31084 / PH-1) (Wheat head blight fungus) protein is Histone H2B (HTB1).